The sequence spans 199 residues: Replication protein (199 aa).

Belongs to the Gram-positive plasmids replication protein type 2 family.

Functionally, is essential for plasmid replication. Nicks the positive strand at the plus origin of replication. In Staphylococcus aureus, this protein is Replication protein (repF).